The sequence spans 260 residues: MILDQLVQASQQRVQKVPVRERVKRIQQARKMTTPVLSFEAMLAQPGLQLIGEVKRASPSKGLIAAEFDYLQIAQDYVAAGIDAISVLTEPRYFKGQLSYLQAITQTVSVPTLRKDFIVAASQIASARIAGASAVLLIVAILTPVQLQAFITLAHELNLSALVEVHTTAESKQAVAAGARIIGINNRNLKDFSVNFATSCQLRQAVPAECYVVAESGIQTATQAQQLAAAGFDAMLVGETLMRAPDKGQAVMQLRAGVRG.

Belongs to the TrpC family.

The catalysed reaction is 1-(2-carboxyphenylamino)-1-deoxy-D-ribulose 5-phosphate + H(+) = (1S,2R)-1-C-(indol-3-yl)glycerol 3-phosphate + CO2 + H2O. It functions in the pathway amino-acid biosynthesis; L-tryptophan biosynthesis; L-tryptophan from chorismate: step 4/5. This is Indole-3-glycerol phosphate synthase from Lactiplantibacillus plantarum (strain ATCC BAA-793 / NCIMB 8826 / WCFS1) (Lactobacillus plantarum).